The sequence spans 244 residues: tRNA (guanine-N(1)-)-methyltransferase (244 aa).

S-adenosyl-L-methionine is bound by residues Gly113 and 133 to 138 (IGDYVL).

This sequence belongs to the RNA methyltransferase TrmD family. Homodimer.

It localises to the cytoplasm. It catalyses the reaction guanosine(37) in tRNA + S-adenosyl-L-methionine = N(1)-methylguanosine(37) in tRNA + S-adenosyl-L-homocysteine + H(+). Its function is as follows. Specifically methylates guanosine-37 in various tRNAs. This chain is tRNA (guanine-N(1)-)-methyltransferase, found in Bacillus anthracis (strain A0248).